The primary structure comprises 113 residues: Photosystem II reaction center Psb28 protein (113 aa).

The protein belongs to the Psb28 family. As to quaternary structure, part of the photosystem II complex.

It localises to the cellular thylakoid membrane. This chain is Photosystem II reaction center Psb28 protein, found in Trichodesmium erythraeum (strain IMS101).